Consider the following 926-residue polypeptide: Alanine--tRNA ligase (926 aa).

His-611, His-615, Cys-714, and His-718 together coordinate Zn(2+).

Belongs to the class-II aminoacyl-tRNA synthetase family. The cofactor is Zn(2+).

The protein localises to the cytoplasm. The enzyme catalyses tRNA(Ala) + L-alanine + ATP = L-alanyl-tRNA(Ala) + AMP + diphosphate. Catalyzes the attachment of alanine to tRNA(Ala) in a two-step reaction: alanine is first activated by ATP to form Ala-AMP and then transferred to the acceptor end of tRNA(Ala). Also edits incorrectly charged Ser-tRNA(Ala) and Gly-tRNA(Ala) via its editing domain. In Methanosarcina mazei (strain ATCC BAA-159 / DSM 3647 / Goe1 / Go1 / JCM 11833 / OCM 88) (Methanosarcina frisia), this protein is Alanine--tRNA ligase.